The chain runs to 388 residues: MNYQPTPEDRFTFGLWTVGWQGRDPFGDATRPALDPVEAVQRLAELGAYGVTFHDDDLIPFGSSDAEREAHVKRFRQALDATGMTVPMATTNLFTHPVFKDGAFTANDRDVRRYALRKTIRNIDLAVELGAKVYVAWGGREGAESGAAKDVRAALDRMKEAFDLLGEYVTSQGYDIRFAIEPKPNEPRGDILLPTIGHALAFIERLERPELYGVNPEVGHEQMAGLNFPHGIAQALWAGKLFHIDLNGQSGIKYDQDLRFGAGDLRAAFWLVDLLESAGWEGPRHFDFKPPRTEDIDGVWASAAGCMRNYLILKERAAAFRADPEVQEALRAARLDQLAEPTAADGLQALLADRTAYEDFDVDAAAARGMAFERLDQLAMDHLLGARG.

Residues H54 and D57 contribute to the active site. Residues E181, E217, H220, D245, D255, D257, and D287 each coordinate Mg(2+).

Belongs to the xylose isomerase family. Homotetramer. The cofactor is Mg(2+).

It localises to the cytoplasm. It catalyses the reaction alpha-D-xylose = alpha-D-xylulofuranose. The polypeptide is Xylose isomerase (Streptomyces thermocyaneoviolaceus).